The following is a 352-amino-acid chain: Light dependent period A (352 aa).

4Fe-4S ferredoxin-type domains lie at 88-119 (RRAW…STGV) and 121-144 (RDRC…AQAW). [4Fe-4S] cluster-binding residues include cysteine 97, cysteine 101, cysteine 105, cysteine 109, cysteine 124, cysteine 127, cysteine 130, and cysteine 134.

As to quaternary structure, interacts with KaiA, CikA and SasA; the complexes do not follow circadian rhythms. Requires [4Fe-4S] cluster as cofactor.

Functionally, functions in an input pathway to the Kai circadian clock. Probably senses the metabolic state of the cell via plastoquinone levels and informs the clock to modulate the photoperiod length. Deletion decreases the ability of the bacteria to modulate the circadian period in response to altered light regimes. Mild overexpression increases the photoperiod. Rapidly degraded in the presence of the quinone analog DBMIB (2,5-dibromo-3-methyl-6-isopropyl-p-benzoquinone), an artifical electron acceptor for photosystem II that reduces the plastoquinone pool. Partially resonsible for sensitivity of CikA to DBMIB, influences the levels of KaiA. This chain is Light dependent period A, found in Synechococcus elongatus (strain ATCC 33912 / PCC 7942 / FACHB-805) (Anacystis nidulans R2).